The sequence spans 467 residues: ATP synthase subunit beta (467 aa).

150–157 serves as a coordination point for ATP; sequence GGAGVGKT.

Belongs to the ATPase alpha/beta chains family. F-type ATPases have 2 components, CF(1) - the catalytic core - and CF(0) - the membrane proton channel. CF(1) has five subunits: alpha(3), beta(3), gamma(1), delta(1), epsilon(1). CF(0) has three main subunits: a(1), b(2) and c(9-12). The alpha and beta chains form an alternating ring which encloses part of the gamma chain. CF(1) is attached to CF(0) by a central stalk formed by the gamma and epsilon chains, while a peripheral stalk is formed by the delta and b chains.

The protein resides in the cell inner membrane. The enzyme catalyses ATP + H2O + 4 H(+)(in) = ADP + phosphate + 5 H(+)(out). Produces ATP from ADP in the presence of a proton gradient across the membrane. The catalytic sites are hosted primarily by the beta subunits. In Aliivibrio fischeri (strain MJ11) (Vibrio fischeri), this protein is ATP synthase subunit beta.